The sequence spans 443 residues: Probable nitrate/nitrite antiporter NarK2 (443 aa).

12 consecutive transmembrane segments (helical) span residues 32–52 (ITTF…ALVV), 66–86 (LFWL…IWTF), 95–115 (HLVT…GFAV), 123–143 (WVLL…SGYM), 172–192 (IVQF…LLGG), 210–230 (NATF…WVYL), 256–276 (SLYI…PLLI), 292–312 (YAFL…PISD), 314–334 (LGGA…ALLV), 346–366 (FPMF…GNAS), 383–403 (VIGW…TLAA), and 409–429 (TGGF…NFFL).

Belongs to the major facilitator superfamily. Nitrate/nitrite porter (TC 2.A.1.8) family.

The protein localises to the cell membrane. It carries out the reaction nitrate(in) + nitrite(out) = nitrate(out) + nitrite(in). Its function is as follows. Probable nitrate/nitrite antiporter that may be involved in nitrate import and nitrite export during anaerobic growth. This is Probable nitrate/nitrite antiporter NarK2 from Thermus thermophilus.